A 231-amino-acid chain; its full sequence is Probable amino-acid ABC transporter permease protein y4tG (231 aa).

6 helical membrane-spanning segments follow: residues 9 to 29 (TGNGELAFAISILPMLLMGLI), 32 to 52 (LQAAFLGFFVACVLGMVFAVL), 64 to 84 (AAVLIEFIRDTPLIAQLFFLY), 86 to 106 (VLPEYGIIFPAFLTGALALGI), 161 to 181 (YLVSIMKDVPVLSVVTIVEML), and 196 to 216 (VPLSMVGGIYLILTIVASALV). In terms of domain architecture, ABC transmembrane type-1 spans 28 to 217 (LITTLQAAFL…LTIVASALVR (190 aa)).

Belongs to the binding-protein-dependent transport system permease family. HisMQ subfamily.

Its subcellular location is the cell inner membrane. Its function is as follows. Probably part of the binding-protein-dependent transport system y4tEFGH for an amino acid. Probably responsible for the translocation of the substrate across the membrane. This Sinorhizobium fredii (strain NBRC 101917 / NGR234) protein is Probable amino-acid ABC transporter permease protein y4tG.